The following is a 2664-amino-acid chain: Inositol 1,4,5-trisphosphate-gated calcium channel ITPR3 (2664 aa).

At 1–2227 (MSEMSSFLHI…YVEGASTGVL (2227 aa)) the chain is on the cytoplasmic side. 5 consecutive MIR domains span residues 113 to 173 (GDVV…LRSN), 174 to 224 (GDNV…INLF), 232 to 288 (EEVL…VEVV), 295 to 372 (GGAG…LDPT), and 378 to 434 (DSFV…IVSV). Positions 266, 268, 269, and 270 each coordinate 1D-myo-inositol 1,4,5-trisphosphate. The segment at 320 to 344 (NPSYKGDASDPKAAGTGAQGRTGRR) is disordered. The 1D-myo-inositol 1,4,5-trisphosphate site is built by arginine 503, lysine 507, arginine 510, tyrosine 567, arginine 568, and lysine 569. A Ca(2+)-binding site is contributed by arginine 743. Phosphoserine is present on residues serine 909 and serine 927. The Ca(2+) site is built by glutamate 1115 and glutamate 1118. Disordered regions lie at residues 1124–1158 (KGASKGEEGEAGPAKDKKERPTDEEGFLHPPGEKS) and 1790–1850 (QQET…VGER). Residues 1792–1805 (ETKSTVAVNMSDLG) are compositionally biased toward polar residues. Phosphoserine occurs at positions 1806, 1825, and 1827. Ca(2+) is bound by residues glutamate 1875 and glutamate 1939. ATP contacts are provided by alanine 1989, glutamate 2142, and lysine 2145. Residues 2228–2248 (GSPLISLLFWILICFSIAALF) form a helical membrane-spanning segment. Residues 2249-2256 (TKRYSVRP) lie on the Extracellular side of the membrane. A helical transmembrane segment spans residues 2257 to 2277 (LIVALILRSIYYLGIGPTLNI). Residues 2278 to 2286 (LGALNLTNK) are Cytoplasmic-facing. A helical membrane pass occupies residues 2287-2304 (IVFVVSFVGNRGTFIRGY). Topologically, residues 2305–2318 (KAMVMDMEFLYHVG) are extracellular. Residues 2319-2339 (YILTSVLGLFAHELFYSILLF) traverse the membrane as a helical segment. Residues 2340–2361 (DLIYREETLFNVIKSVTRNGRS) lie on the Cytoplasmic side of the membrane. Residues 2362-2382 (ILLTALLALILVYLFSIVGFL) form a helical membrane-spanning segment. At 2383-2489 (FLKDDFILEV…ESLFPARVVY (107 aa)) the chain is on the extracellular side. The cysteines at positions 2448 and 2454 are disulfide-linked. Residues 2490-2510 (DLLFFFIVIIIVLNLIFGVII) traverse the membrane as a helical segment. Residues 2511-2664 (DTFADLRSEK…FVDVQNCMSR (154 aa)) are Cytoplasmic-facing. ATP-binding residues include cysteine 2531 and phenylalanine 2532. Position 2531 (cysteine 2531) interacts with Zn(2+). 2 residues coordinate Zn(2+): cysteine 2534 and histidine 2551. ATP contacts are provided by lysine 2553, histidine 2556, asparagine 2557, and methionine 2558. Histidine 2556 provides a ligand contact to Zn(2+). Threonine 2574 is a binding site for Ca(2+). A phosphoserine mark is found at serine 2602 and serine 2663.

This sequence belongs to the InsP3 receptor family. Homotetramer. Homodimer. Interacts with TRPC1, TRPC3 and TRPC4. Interacts with TRPV4. Interacts with SIGMAR1. Interacts with PML and AKT1. Interacts with IRAG2 (via coiled-coil domain). Interacts with CABP1. Interacts with TMBIM4/LFG4. Interacts with CEMIP. Interacts with TESPA1. Interacts with TMEM203. Interacts with BOK; regulates ITPR3 expression. Interacts with BCL2L10. Interacts with CHGA and CHGB. Post-translationally, phosphorylated by AKT1 on serine and/or threonine residues.

The protein localises to the endoplasmic reticulum membrane. It localises to the cytoplasmic vesicle. Its subcellular location is the secretory vesicle membrane. The enzyme catalyses Ca(2+)(in) = Ca(2+)(out). With respect to regulation, inositol 1,4,5-trisphosphate-gated calcium channel is regulated by cytosolic calcium in a biphasic manner. At low concentrations, cytosolic calcium binds at a high-affinity juxtamembrane domain (JD) calcium binding site, allowing ITPR3 to activate by escaping a low-energy resting state through an ensemble of preactivated states. At high cytosolic calcium concentrations, ITPR3 preferentially enters an inhibited state stabilized by calcium binding at a second, low-affinity cytoplasmic domain (CD) calcium binding site. Inositol 1,4,5-trisphosphate-gated calcium channel that, upon 1D-myo-inositol 1,4,5-trisphosphate binding, transports calcium from the endoplasmic reticulum lumen to cytoplasm, thus releasing the intracellular calcium and therefore participates in cellular calcium ion homeostasis. 1D-myo-inositol 1,4,5-trisphosphate binds to the ligand-free channel without altering its global conformation, yielding the low-energy resting state, then progresses through resting-to preactivated transitions to the higher energy preactivated state, which increases affinity for calcium, promoting binding of the low basal cytosolic calcium at the juxtamembrane domain (JD) site, favoring the transition through the ensemble of high-energy intermediate states along the trajectory to the fully-open activated state. Upon opening, releases calcium in the cytosol where it can bind to the low-affinity cytoplasmic domain (CD) site and stabilizes the inhibited state to terminate calcium release. This is Inositol 1,4,5-trisphosphate-gated calcium channel ITPR3 from Bos taurus (Bovine).